The sequence spans 300 residues: MCSNNNTSSGSYGELQLHDESSGSCRKKQKKDKVRRRGPGVAELEKIRLQEEYKPPLSSSPSLPNIDHHHHTLFAPASSVYDLVMTSPNFSFPEKLASTLPVFPISYGSLIPPAPIFQRSQHSLMMNLPNPSPGAGRFYQFIEPPSNQRSCVDSVSQFLEEENKKIFTAKKRPWPFLTDTTKPSVGPTTTSTIIRPDATQNRSMGITPVQETGTTTSNPIAIDSPTSIPRHYPRFIPLGLQYEQQQQKLKDLDETMQWRSKKPFYSFIPSGDPSNDDQEQRPCDLFGSAADHGIDLNLKL.

Over residues M1–S11 the composition is skewed to polar residues. The tract at residues M1–P64 is disordered. The segment covering C25 to G38 has biased composition (basic residues). The SPL motif lies at R37–E45. Basic and acidic residues predominate over residues E43–K54. Positions P55–P64 are enriched in low complexity. An EAR motif is present at residues I294–L300.

Homodimer and heterodimer with SPL and SPEARs. Interacts with SPL, SPEAR1, SPEAR3 and SPEAR4. As to expression, expressed in leaves.

In terms of biological role, adapter-like transcriptional repressor recruiting TPL/TPR corepressors to inhibit TCP transcription factors. May be involved in leaf development. The protein is Protein SPEAR2 of Arabidopsis thaliana (Mouse-ear cress).